Consider the following 463-residue polypeptide: Vacuolar cation/proton exchanger 1 (463 aa).

A2 is modified (N-acetylalanine). The Cytoplasmic portion of the chain corresponds to 2 to 68 (AGIVTEPWSV…LKDFLSNLQE (67 aa)). Positions 25–33 (SRELRLGRT) are required for autoinhibitory regulation. The tract at residues 56-62 (YKGLKDF) is required for interaction with autoinhibitory region. Residues 69-89 (VILGTKLAILFPAIPAAIICT) traverse the membrane as a helical segment. The interval 87–95 (ICTYCGVSQ) is required for Ca(2+)/H(+) exchange activity. At 90-96 (YCGVSQP) the chain is on the extracellular side. Residues 97 to 116 (WIFGLSLLGLTPLAERVSFL) traverse the membrane as a helical segment. Topologically, residues 117–127 (TEQLAFYTGPT) are cytoplasmic. Residues 128–148 (LGGLLNATCGNATELIIAILA) form a helical membrane-spanning segment. Residues 137-172 (GNATELIIAILALTNNKVAVVKYSLLGSILSNLLLV) form a cation selection region. Over 149 to 161 (LTNNKVAVVKYSL) the chain is Extracellular. The chain crosses the membrane as a helical span at residues 162–182 (LGSILSNLLLVLGTSLFCGGI). At 183-197 (ANIRREQRFDRKQAD) the chain is on the cytoplasmic side. Residues 198–218 (VNFFLLLLGFLCHLLPLLVGY) form a helical membrane-spanning segment. Over 219–238 (LKNGEASAAVLSDMQLSISR) the chain is Extracellular. The helical transmembrane segment at 239–259 (GFSIVMLISYIAYLVFQLWTH) threads the bilayer. The Cytoplasmic portion of the chain corresponds to 260–281 (RQLFDAQEQEDEYDDDVEQETA). Residues 282 to 302 (VISFWSGFAWLVGMTLVIALL) form a helical membrane-spanning segment. Over 303–325 (SEYVVATIEEASDKWNLSVSFIS) the chain is Extracellular. N318 carries an N-linked (GlcNAc...) asparagine glycan. Residues 326 to 346 (IILLPIVGNAAEHAGAVIFAF) form a helical membrane-spanning segment. Positions 333–368 (GNAAEHAGAVIFAFKNKLDISLGVALGSATQIGLFV) are cation selection. Residues 347-360 (KNKLDISLGVALGS) lie on the Cytoplasmic side of the membrane. Residues 361-381 (ATQIGLFVVPLTIIVAWILGI) form a helical membrane-spanning segment. At 382–384 (NMD) the chain is on the extracellular side. The helical transmembrane segment at 385 to 405 (LNFGPLETGCLAVSIIITAFT) threads the bilayer. The Cytoplasmic portion of the chain corresponds to 406–411 (LQDGSS). Residues 412–432 (HYMKGLVLLLCYFIIAICFFV) form a helical membrane-spanning segment. The Extracellular segment spans residues 433–463 (DKLPQKQNAIHLGHQAMNNVVTATGGGVFSS).

The protein belongs to the Ca(2+):cation antiporter (CaCA) (TC 2.A.19) family. Cation/proton exchanger (CAX) subfamily. In terms of assembly, interacts with GRXS14 and CXIP4. As to expression, expressed at low levels in leaves, stems and flowers.

It localises to the vacuole membrane. With respect to regulation, activated by monothiol glutaredoxin GRXS14 and CXIP4. Inhibited by excess of Ca(2+) and Cd(2+), Na(+) and K(+), but not Mn(2+). Vacuolar cation/proton exchanger (CAX). Translocates Ca(2+) and other metal ions into vacuoles using the proton gradient formed by H(+)-ATPase and H(+)-pyrophosphatase. Involved in ion homeostasis in association with CAX3. May play a role in cold-acclimation response. The sequence is that of Vacuolar cation/proton exchanger 1 (CAX1) from Arabidopsis thaliana (Mouse-ear cress).